A 290-amino-acid polypeptide reads, in one-letter code: Pyridoxal kinase PdxY (290 aa).

Residues Ser12 and Thr47 to Gln48 contribute to the substrate site. Residues Asp114, Glu151, Lys184, and Arg211–Leu214 each bind ATP. Asp225 lines the substrate pocket.

It belongs to the pyridoxine kinase family. PdxY subfamily. Homodimer. Mg(2+) is required as a cofactor.

The enzyme catalyses pyridoxal + ATP = pyridoxal 5'-phosphate + ADP + H(+). It functions in the pathway cofactor metabolism; pyridoxal 5'-phosphate salvage; pyridoxal 5'-phosphate from pyridoxal: step 1/1. Pyridoxal kinase involved in the salvage pathway of pyridoxal 5'-phosphate (PLP). Catalyzes the phosphorylation of pyridoxal to PLP. The chain is Pyridoxal kinase PdxY from Pseudomonas putida (strain ATCC 700007 / DSM 6899 / JCM 31910 / BCRC 17059 / LMG 24140 / F1).